We begin with the raw amino-acid sequence, 539 residues long: Efflux pump roqT (539 aa).

Positions 1–25 (MEKEVATDPLPQEIPSDAPDEGGSL) are disordered. Helical transmembrane passes span 36 to 56 (VSLT…VTII), 108 to 128 (LFLF…VGLI), 133 to 153 (IAGL…AQTV), 160 to 180 (VFTA…PPLG), 191 to 211 (WCFY…LFFF), 233 to 253 (IGSF…QWGG), 262 to 282 (RIIV…AVQI), 305 to 325 (WFAI…PIWF), 338 to 360 (VMNL…LVTI), 362 to 384 (GYYN…LLST), 395 to 415 (IGYQ…PFMV), and 502 to 522 (AFYV…ALEW).

It belongs to the major facilitator superfamily. TCR/Tet family.

Its subcellular location is the membrane. Functionally, efflux pump; part of the gene cluster that mediates the biosynthesis of the mycotoxins roquefortine C and meleagrin. The chain is Efflux pump roqT from Penicillium rubens (strain ATCC 28089 / DSM 1075 / NRRL 1951 / Wisconsin 54-1255) (Penicillium chrysogenum).